The following is a 269-amino-acid chain: NAD kinase (269 aa).

The Proton acceptor role is filled by Asp45. NAD(+) contacts are provided by residues 45-46 (DG), 122-123 (NE), Arg149, Asp151, and Ala186.

Belongs to the NAD kinase family. A divalent metal cation is required as a cofactor.

Its subcellular location is the cytoplasm. The enzyme catalyses NAD(+) + ATP = ADP + NADP(+) + H(+). Involved in the regulation of the intracellular balance of NAD and NADP, and is a key enzyme in the biosynthesis of NADP. Catalyzes specifically the phosphorylation on 2'-hydroxyl of the adenosine moiety of NAD to yield NADP. The chain is NAD kinase from Staphylococcus carnosus (strain TM300).